Here is a 348-residue protein sequence, read N- to C-terminus: Protein RecA (348 aa).

Glycine 71–threonine 78 provides a ligand contact to ATP.

Belongs to the RecA family.

Its subcellular location is the cytoplasm. In terms of biological role, can catalyze the hydrolysis of ATP in the presence of single-stranded DNA, the ATP-dependent uptake of single-stranded DNA by duplex DNA, and the ATP-dependent hybridization of homologous single-stranded DNAs. It interacts with LexA causing its activation and leading to its autocatalytic cleavage. In Aquifex pyrophilus, this protein is Protein RecA.